The chain runs to 263 residues: Elongation factor Ts (263 aa).

The involved in Mg(2+) ion dislocation from EF-Tu stretch occupies residues 82–85 (TDFV). Residues 221–251 (APPAVVEAPVAETPEPAVAETPEAKPAATES) show a composition bias toward low complexity. Positions 221-263 (APPAVVEAPVAETPEPAVAETPEAKPAATESKPAKSKSAKKKK) are disordered. Over residues 254 to 263 (AKSKSAKKKK) the composition is skewed to basic residues.

The protein belongs to the EF-Ts family.

The protein resides in the cytoplasm. Functionally, associates with the EF-Tu.GDP complex and induces the exchange of GDP to GTP. It remains bound to the aminoacyl-tRNA.EF-Tu.GTP complex up to the GTP hydrolysis stage on the ribosome. This is Elongation factor Ts from Cyanothece sp. (strain PCC 7425 / ATCC 29141).